The primary structure comprises 237 residues: Bax inhibitor 1 (237 aa).

Residues 1-29 (MNIFDRKINFDALLKFSHITPSTQQHLKK) are Cytoplasmic-facing. K7 participates in a covalent cross-link: Glycyl lysine isopeptide (Lys-Gly) (interchain with G-Cter in ubiquitin). A helical membrane pass occupies residues 30-50 (VYASFALCMFVAAAGAYVHVV). Over 51–52 (TR) the chain is Lumenal. Residues 53–73 (FIQAGLLSALGALALMICLMA) form a helical membrane-spanning segment. The Cytoplasmic segment spans residues 74-86 (TPHSHETEQKRLG). Residues 87 to 107 (LLAGFAFLTGVGLGPALELCI) form a helical membrane-spanning segment. Residues 108-112 (AINPS) are Lumenal-facing. A helical membrane pass occupies residues 113–133 (ILPTAFMGTAMIFTCFSLSAL). Residues 134-139 (YARRRS) are Cytoplasmic-facing. A helical membrane pass occupies residues 140–160 (YLFLGGILMSAMSLMFVSSLG). Topologically, residues 161-166 (NLFFGS) are lumenal. Residues 167–187 (IWLFQANLYMGLLVMCGFVLF) form a helical membrane-spanning segment. Topologically, residues 188 to 206 (DTQLIIEKAEHGDKDYIWH) are cytoplasmic. The segment at residues 207-227 (CIDLFLDFVTLFRKLMLILAF) is an intramembrane region (helical). The Cytoplasmic segment spans residues 228-237 (NEKDKKKEKK).

Belongs to the BI1 family. In terms of assembly, interacts with BCL2 and BCL2L1. Interacts with ERN1. In terms of processing, ubiquitinated by BFAR, leading to proteasomal degradation. As to expression, highly abundant in adult testis.

Its subcellular location is the endoplasmic reticulum membrane. In terms of biological role, endoplasmic reticulum (ER)-resident protein that confers cellular protection as an anti-apoptotic protein by limiting multiple stress-inducing pathways surrounding the endoplasmic reticulum and mitochondria. Inhibits the activities of the key sensor for the endoplasmic reticulum unfolded protein response IRE1alpha/ERN1 both directly and by blocking BAX/BAK binding. Modulates ER calcium homeostasis by acting as a calcium-leak channel. Negatively regulates autophagy and autophagosome formation, especially during periods of nutrient deprivation, and reduces cell survival during starvation. This chain is Bax inhibitor 1 (Tmbim6), found in Rattus norvegicus (Rat).